Reading from the N-terminus, the 556-residue chain is Glucose-6-phosphate isomerase (556 aa).

The active-site Proton donor is the Glu364. Active-site residues include His395 and Lys521.

It belongs to the GPI family.

The protein localises to the cytoplasm. It catalyses the reaction alpha-D-glucose 6-phosphate = beta-D-fructose 6-phosphate. The protein operates within carbohydrate biosynthesis; gluconeogenesis. Its pathway is carbohydrate degradation; glycolysis; D-glyceraldehyde 3-phosphate and glycerone phosphate from D-glucose: step 2/4. Catalyzes the reversible isomerization of glucose-6-phosphate to fructose-6-phosphate. This Corynebacterium kroppenstedtii (strain DSM 44385 / JCM 11950 / CIP 105744 / CCUG 35717) protein is Glucose-6-phosphate isomerase.